Reading from the N-terminus, the 549-residue chain is Probable protein kinase UbiB (549 aa).

Positions aspartate 123–leucine 501 constitute a Protein kinase domain. Residues leucine 129 to valine 137 and lysine 152 contribute to the ATP site. Aspartate 287 functions as the Proton acceptor in the catalytic mechanism. Transmembrane regions (helical) follow at residues serine 498–glutamine 518 and alanine 520–tryptophan 540.

It belongs to the ABC1 family. UbiB subfamily.

Its subcellular location is the cell inner membrane. Its pathway is cofactor biosynthesis; ubiquinone biosynthesis [regulation]. Functionally, is probably a protein kinase regulator of UbiI activity which is involved in aerobic coenzyme Q (ubiquinone) biosynthesis. The polypeptide is Probable protein kinase UbiB (Shewanella halifaxensis (strain HAW-EB4)).